The following is a 322-amino-acid chain: uncharacterized protein (322 aa).

Belongs to the glycosyltransferase 2 family.

This is an uncharacterized protein from Nostoc sp. (strain PCC 7120 / SAG 25.82 / UTEX 2576).